Reading from the N-terminus, the 504-residue chain is Glycine--tRNA ligase (504 aa).

Residues arginine 99 and glutamate 189 each coordinate substrate. ATP contacts are provided by residues 221–223 (RNE), 231–236 (FRVREL), 306–307 (EI), and 365–368 (GVDR). 236 to 240 (LEQME) is a substrate binding site. A substrate-binding site is contributed by 361 to 365 (EPSAG).

The protein belongs to the class-II aminoacyl-tRNA synthetase family. In terms of assembly, homodimer.

Its subcellular location is the cytoplasm. It catalyses the reaction tRNA(Gly) + glycine + ATP = glycyl-tRNA(Gly) + AMP + diphosphate. Functionally, catalyzes the attachment of glycine to tRNA(Gly). This Deinococcus geothermalis (strain DSM 11300 / CIP 105573 / AG-3a) protein is Glycine--tRNA ligase.